We begin with the raw amino-acid sequence, 308 residues long: Probable manganese-dependent inorganic pyrophosphatase (308 aa).

Residues histidine 9, aspartate 13, aspartate 15, aspartate 75, histidine 97, and aspartate 149 each coordinate Mn(2+).

This sequence belongs to the PPase class C family. Requires Mn(2+) as cofactor.

Its subcellular location is the cytoplasm. It carries out the reaction diphosphate + H2O = 2 phosphate + H(+). This chain is Probable manganese-dependent inorganic pyrophosphatase, found in Listeria welshimeri serovar 6b (strain ATCC 35897 / DSM 20650 / CCUG 15529 / CIP 8149 / NCTC 11857 / SLCC 5334 / V8).